A 404-amino-acid polypeptide reads, in one-letter code: Cysteine desulfurase IscS (404 aa).

Pyridoxal 5'-phosphate-binding positions include 75-76 (AT), N155, Q183, and 203-205 (SAH). At K206 the chain carries N6-(pyridoxal phosphate)lysine. T243 lines the pyridoxal 5'-phosphate pocket. Catalysis depends on C328, which acts as the Cysteine persulfide intermediate. C328 contacts [2Fe-2S] cluster.

The protein belongs to the class-V pyridoxal-phosphate-dependent aminotransferase family. NifS/IscS subfamily. As to quaternary structure, homodimer. Forms a heterotetramer with IscU, interacts with other sulfur acceptors. Pyridoxal 5'-phosphate serves as cofactor.

Its subcellular location is the cytoplasm. The catalysed reaction is (sulfur carrier)-H + L-cysteine = (sulfur carrier)-SH + L-alanine. The protein operates within cofactor biosynthesis; iron-sulfur cluster biosynthesis. Master enzyme that delivers sulfur to a number of partners involved in Fe-S cluster assembly, tRNA modification or cofactor biosynthesis. Catalyzes the removal of elemental sulfur atoms from cysteine to produce alanine. Functions as a sulfur delivery protein for Fe-S cluster synthesis onto IscU, an Fe-S scaffold assembly protein, as well as other S acceptor proteins. This chain is Cysteine desulfurase IscS, found in Tolumonas auensis (strain DSM 9187 / NBRC 110442 / TA 4).